The following is a 397-amino-acid chain: Ubiquitin-like modifier-activating enzyme 5 (397 aa).

5 residues coordinate ATP: Gly-76, Asp-97, Lys-120, Asn-143, and Asn-177. Cys-219 and Cys-222 together coordinate Zn(2+). The Glycyl thioester intermediate role is filled by Cys-243. Cys-296 and Cys-301 together coordinate Zn(2+). The short motif at 327-339 (IVHEDNDWGIELV) is the UFM1-interacting sequence (UIS) element. Residues 340–370 (SETTEDELKAASGPVPDLPVGITVAYTIPNK) form a linker region. A UFC1-binding sequence (UFC) motif is present at residues 382-397 (ESEESLEDLMAKMRNL).

Belongs to the ubiquitin-activating E1 family. UBA5 subfamily. Homodimer; homodimerization is required for UFM1 activation. Interacts (via UIS motif) with UFM1; binds UFM1 via a trans-binding mechanism in which UFM1 interacts with distinct sites in both subunits of the UBA5 homodimer. Interacts (via C-terminus) with UFC1.

It localises to the cytoplasm. The protein resides in the nucleus. The protein localises to the endoplasmic reticulum membrane. It is found in the golgi apparatus. Its function is as follows. E1-like enzyme which specifically catalyzes the first step in ufmylation. Activates UFM1 by first adenylating its C-terminal glycine residue with ATP, and thereafter linking this residue to the side chain of a cysteine residue in E1, yielding a UFM1-E1 thioester and free AMP. Activates UFM1 via a trans-binding mechanism, in which UFM1 interacts with distinct sites in both subunits of the UBA5 homodimer. Trans-binding also promotes stabilization of the UBA5 homodimer, and enhances ATP-binding. Transfer of UFM1 from UBA5 to the E2-like enzyme UFC1 also takes place using a trans mechanism. Ufmylation plays a key role in various processes, such as ribosome recycling, response to DNA damage, interferon response or reticulophagy (also called ER-phagy). The chain is Ubiquitin-like modifier-activating enzyme 5 from Gallus gallus (Chicken).